We begin with the raw amino-acid sequence, 158 residues long: Small ribosomal subunit protein uS7 (158 aa).

The protein belongs to the universal ribosomal protein uS7 family. As to quaternary structure, part of the 30S ribosomal subunit. Contacts proteins S9 and S11.

One of the primary rRNA binding proteins, it binds directly to 16S rRNA where it nucleates assembly of the head domain of the 30S subunit. Is located at the subunit interface close to the decoding center, probably blocks exit of the E-site tRNA. In Porphyromonas gingivalis (strain ATCC 33277 / DSM 20709 / CIP 103683 / JCM 12257 / NCTC 11834 / 2561), this protein is Small ribosomal subunit protein uS7.